The primary structure comprises 506 residues: MTETTAHPVTTATGTDVRVRFCPSPTGTPHVGLIRTALFNWAYARHTGGKLVFRVEDTDAARDSEESYEQLIEALRWLEIDWDEGEGVGGPHAPYRQSQRTDLYLDVIRKLTESGHLYESYATAEEIEARNRAAGRDPKMGYDNFERDLTEAERQAFRDEGRSPALRLRVPDTDLSFDDLVRGTVTFPAGSFPDFVLVRPNGAPLYTLVNPVDDALMGITHVLRGEDLLSSTPRQIALYHALIDIGVADAIPRFGHLPYVMGEGNKKLSKRDPESNLFHHRDRGFIPEGLINYLALLGWSLTHDRDVFSRMEMVTAFDVADVTPAPARFDLKKAESLNGDHIRLLALDDFAQRLVPYLQAADVVGAELTHDEQRMLEAAAPLVQERMQLLGEAPDLLSFLFTTADALPYDDAAVQALKDDAAAVLAASRGALAGVPHTQWDIDLVQEVLQNTLITGMGMKPRLAYGPLRVAVSGRRISPPLFESMVLLGKDETIARLDRLAGMLGG.

The 'HIGH' region signature appears at Pro23–Leu33. Positions Lys267–Arg271 match the 'KMSKS' region motif. Lys270 is an ATP binding site.

Belongs to the class-I aminoacyl-tRNA synthetase family. Glutamate--tRNA ligase type 1 subfamily. In terms of assembly, monomer.

It is found in the cytoplasm. The enzyme catalyses tRNA(Glu) + L-glutamate + ATP = L-glutamyl-tRNA(Glu) + AMP + diphosphate. Catalyzes the attachment of glutamate to tRNA(Glu) in a two-step reaction: glutamate is first activated by ATP to form Glu-AMP and then transferred to the acceptor end of tRNA(Glu). The chain is Glutamate--tRNA ligase from Clavibacter michiganensis subsp. michiganensis (strain NCPPB 382).